Reading from the N-terminus, the 162-residue chain is Nucleotide-binding protein AnaeK_0101 (162 aa).

It belongs to the YajQ family.

Its function is as follows. Nucleotide-binding protein. The protein is Nucleotide-binding protein AnaeK_0101 of Anaeromyxobacter sp. (strain K).